Here is a 463-residue protein sequence, read N- to C-terminus: Carnosine N-methyltransferase (463 aa).

Disordered stretches follow at residues 1–64 (MTKN…SQLK) and 79–104 (KHNH…EKEE). Low complexity predominate over residues 9–58 (KSNNSNISNNNNNNNNNNNNNNNNNNNNNNNNNNNNNNNNNNNNNNNNKN). Basic and acidic residues predominate over residues 79–93 (KHNHDHSHDHNHDYD). Residues 94–103 (DNNEDDEEKE) show a composition bias toward acidic residues. Gln215, Arg218, Gly260, Glu281, Asp351, Phe352, and Cys367 together coordinate S-adenosyl-L-methionine. A carnosine-binding site is contributed by Asp371. Residue Tyr379 participates in S-adenosyl-L-methionine binding. His402 and Tyr450 together coordinate carnosine.

It belongs to the carnosine N-methyltransferase family.

It catalyses the reaction carnosine + S-adenosyl-L-methionine = anserine + S-adenosyl-L-homocysteine + H(+). Its function is as follows. N-methyltransferase that mediates the formation of anserine (beta-alanyl-N(Pi)-methyl-L-histidine) from carnosine. The sequence is that of Carnosine N-methyltransferase from Dictyostelium discoideum (Social amoeba).